A 155-amino-acid chain; its full sequence is Ribosome maturation factor RimP (155 aa).

The protein belongs to the RimP family.

The protein resides in the cytoplasm. Functionally, required for maturation of 30S ribosomal subunits. The chain is Ribosome maturation factor RimP from Synechococcus sp. (strain RCC307).